Reading from the N-terminus, the 414-residue chain is uncharacterized protein (414 aa).

The region spanning 246 to 360 (EAPNITKLAG…LNKRVEEIRR (115 aa)) is the Nop domain. The tract at residues 358–414 (IRRKYPKPPKKKKKEKPKAKKKEKKGKKEKSKKKKDKKKDKKGKKERKVIGKTKSRK) is disordered. Residues 361–414 (KYPKPPKKKKKEKPKAKKKEKKGKKEKSKKKKDKKKDKKGKKERKVIGKTKSRK) are compositionally biased toward basic residues.

Belongs to the NOP5/NOP56 family.

This is an uncharacterized protein from Methanocaldococcus jannaschii (strain ATCC 43067 / DSM 2661 / JAL-1 / JCM 10045 / NBRC 100440) (Methanococcus jannaschii).